Reading from the N-terminus, the 231-residue chain is Ribosome maturation factor RimM (231 aa).

The interval 1 to 29 (MSERDSGSSGRAKAKRQPGAKAPFGPFVR) is disordered. A PRC barrel domain is found at 150-231 (TDEYYWVDLV…KIIVDWEADY (82 aa)).

It belongs to the RimM family. As to quaternary structure, binds ribosomal protein uS19.

It is found in the cytoplasm. In terms of biological role, an accessory protein needed during the final step in the assembly of 30S ribosomal subunit, possibly for assembly of the head region. Essential for efficient processing of 16S rRNA. May be needed both before and after RbfA during the maturation of 16S rRNA. It has affinity for free ribosomal 30S subunits but not for 70S ribosomes. In Paraburkholderia phymatum (strain DSM 17167 / CIP 108236 / LMG 21445 / STM815) (Burkholderia phymatum), this protein is Ribosome maturation factor RimM.